Reading from the N-terminus, the 513-residue chain is ATP synthase subunit alpha (513 aa).

Position 169–176 (169–176) interacts with ATP; the sequence is GDRQTGKT.

This sequence belongs to the ATPase alpha/beta chains family. As to quaternary structure, F-type ATPases have 2 components, CF(1) - the catalytic core - and CF(0) - the membrane proton channel. CF(1) has five subunits: alpha(3), beta(3), gamma(1), delta(1), epsilon(1). CF(0) has three main subunits: a(1), b(2) and c(9-12). The alpha and beta chains form an alternating ring which encloses part of the gamma chain. CF(1) is attached to CF(0) by a central stalk formed by the gamma and epsilon chains, while a peripheral stalk is formed by the delta and b chains.

It localises to the cell inner membrane. It catalyses the reaction ATP + H2O + 4 H(+)(in) = ADP + phosphate + 5 H(+)(out). Produces ATP from ADP in the presence of a proton gradient across the membrane. The alpha chain is a regulatory subunit. This Actinobacillus succinogenes (strain ATCC 55618 / DSM 22257 / CCUG 43843 / 130Z) protein is ATP synthase subunit alpha.